The chain runs to 380 residues: Aprataxin (380 aa).

One can recognise an FHA-like domain in the interval 36–85; sequence PVIIGRTPELGITDKLCSRSQLELTSNCYKRYVLVKRLGANTSQINGIDI. Positions 176–207 are disordered; the sequence is VYAFDSPSPMSSRCEKKAESNKRAPTHKHWSQ. Residues 188–197 show a composition bias toward basic and acidic residues; that stretch reads RCEKKAESNK. The HIT domain occupies 206-312; the sequence is SQGLKASMED…ISQDFQSSSF (107 aa). 2 interaction with DNA substrate regions span residues 231–235 and 294–295; these read DKYPK and SM. The short motif at 297–301 is the Histidine triad motif element; it reads QMHMH. The active-site Tele-AMP-histidine intermediate is the histidine 299. The C2H2-type; atypical zinc-finger motif lies at 356–378; the sequence is LKCHRCKKPQKNIPTLKKHIDSC.

The protein localises to the nucleus. It localises to the nucleoplasm. The protein resides in the nucleolus. It catalyses the reaction a 5'-end adenosine-5'-diphospho-5'-2'-deoxyribonucleoside-DNA + H2O = a 5'-end 5'-phospho-2'-deoxyribonucleoside-DNA + AMP + 2 H(+). The catalysed reaction is a 5'-end adenosine-5'-diphospho-5'-ribonucleoside-2'-deoxyribonucleotide-DNA + H2O = a 5'-end 5'-phospho-ribonucleoside-2'-deoxyribonucleotide-DNA + AMP + 2 H(+). The enzyme catalyses a 3'-end 2'-deoxyribonucleotide-3'-diphospho-5'-guanosine-DNA + H2O = a 3'-end 2'-deoxyribonucleotide 3'-phosphate-DNA + GMP + 2 H(+). In terms of biological role, DNA-binding protein involved in single-strand DNA break repair, double-strand DNA break repair and base excision repair. Resolves abortive DNA ligation intermediates formed either at base excision sites, or when DNA ligases attempt to repair non-ligatable breaks induced by reactive oxygen species. Catalyzes the release of adenylate groups covalently linked to 5'-phosphate termini, resulting in the production of 5'-phosphate termini that can be efficiently rejoined. Also able to hydrolyze adenosine 5'-monophosphoramidate (AMP-NH(2)) and diadenosine tetraphosphate (AppppA), but with lower catalytic activity. Likewise, catalyzes the release of 3'-linked guanosine (DNAppG) and inosine (DNAppI) from DNA, but has higher specific activity with 5'-linked adenosine (AppDNA). In Ciona intestinalis (Transparent sea squirt), this protein is Aprataxin (APTX).